Reading from the N-terminus, the 439-residue chain is UDP-N-acetylmuramoylalanine--D-glutamate ligase (439 aa).

116–122 (GSNGKTT) contributes to the ATP binding site.

Belongs to the MurCDEF family.

Its subcellular location is the cytoplasm. It catalyses the reaction UDP-N-acetyl-alpha-D-muramoyl-L-alanine + D-glutamate + ATP = UDP-N-acetyl-alpha-D-muramoyl-L-alanyl-D-glutamate + ADP + phosphate + H(+). It participates in cell wall biogenesis; peptidoglycan biosynthesis. Cell wall formation. Catalyzes the addition of glutamate to the nucleotide precursor UDP-N-acetylmuramoyl-L-alanine (UMA). The sequence is that of UDP-N-acetylmuramoylalanine--D-glutamate ligase from Shewanella oneidensis (strain ATCC 700550 / JCM 31522 / CIP 106686 / LMG 19005 / NCIMB 14063 / MR-1).